The primary structure comprises 1149 residues: ATP-dependent helicase/deoxyribonuclease subunit B (1149 aa).

Residue 8–15 (GRAGTGKT) coordinates ATP. Residues C784, C1102, C1105, and C1111 each coordinate [4Fe-4S] cluster.

It belongs to the helicase family. AddB/RexB type 1 subfamily. As to quaternary structure, heterodimer of AddA and AddB. The cofactor is Mg(2+). [4Fe-4S] cluster serves as cofactor.

Functionally, the heterodimer acts as both an ATP-dependent DNA helicase and an ATP-dependent, dual-direction single-stranded exonuclease. Recognizes the chi site generating a DNA molecule suitable for the initiation of homologous recombination. The AddB subunit has 5' -&gt; 3' nuclease activity but not helicase activity. This is ATP-dependent helicase/deoxyribonuclease subunit B from Thermoanaerobacter pseudethanolicus (strain ATCC 33223 / 39E) (Clostridium thermohydrosulfuricum).